The chain runs to 552 residues: Putative transport protein APL_0966 (552 aa).

The next 5 helical transmembrane spans lie at 4 to 24, 29 to 49, 65 to 85, 95 to 115, and 161 to 181; these read IAII…IGHI, VGLG…CTHL, FGLI…FFAS, GFAV…HKLF, and IAYP…RIIF. RCK C-terminal domains are found at residues 190–275 and 277–360; these read QEFD…ILGE and ADVS…IIGD. Helical transmembrane passes span 370–390, 402–424, 438–458, 463–483, 492–512, and 529–549; these read MLPI…PLYI, AGGP…LYWF, IVLF…DTLL, LAWM…TGFV, YLSL…LAFA, and VYPL…ILLW.

Belongs to the AAE transporter (TC 2.A.81) family. YidE subfamily.

Its subcellular location is the cell membrane. The protein is Putative transport protein APL_0966 of Actinobacillus pleuropneumoniae serotype 5b (strain L20).